The primary structure comprises 348 residues: ATPase GET3 (348 aa).

ATP is bound at residue 26–33 (KGGVGKTT). The active site involves Asp-57. ATP contacts are provided by Glu-241 and Asn-268. 2 residues coordinate Zn(2+): Cys-280 and Cys-283. ATP is bound at residue 310 to 312 (PLL).

This sequence belongs to the arsA ATPase family. In terms of assembly, homodimer. Component of the Golgi to ER traffic (GET) complex, which is composed of GET1, GET2 and GET3. Within the complex, GET1 and GET2 form a heterotetramer which is stabilized by phosphatidylinositol binding and which binds to the GET3 homodimer. Interacts with the chloride channel protein GEF1.

It localises to the cytoplasm. It is found in the endoplasmic reticulum. The protein resides in the golgi apparatus. Functionally, ATPase required for the post-translational delivery of tail-anchored (TA) proteins to the endoplasmic reticulum. Recognizes and selectively binds the transmembrane domain of TA proteins in the cytosol. This complex then targets to the endoplasmic reticulum by membrane-bound receptors GET1 and GET2, where the tail-anchored protein is released for insertion. This process is regulated by ATP binding and hydrolysis. ATP binding drives the homodimer towards the closed dimer state, facilitating recognition of newly synthesized TA membrane proteins. ATP hydrolysis is required for insertion. Subsequently, the homodimer reverts towards the open dimer state, lowering its affinity for the GET1-GET2 receptor, and returning it to the cytosol to initiate a new round of targeting. Cooperates with the HDEL receptor ERD2 to mediate the ATP-dependent retrieval of resident ER proteins that contain a C-terminal H-D-E-L retention signal from the Golgi to the ER. Involved in low-level resistance to the oxyanions arsenite and arsenate, and in heat tolerance. The chain is ATPase GET3 from Debaryomyces hansenii (strain ATCC 36239 / CBS 767 / BCRC 21394 / JCM 1990 / NBRC 0083 / IGC 2968) (Yeast).